We begin with the raw amino-acid sequence, 266 residues long: MTTLSTLNKFKKDGTKFTCLTCYDAMFARMMEKAQIDTILIGDSLGMVVQGHDSTLPVTVDDMAYHTANIARSNKQALILADLPFMSYVTLPEAVVNSRKLMQAGAHVIKIEGGCELCELITTLAQAGTPTCVHLGLTPQSVNVFGGYKVQGRGNEAGQKLLDDAKAVVDAGAALLVLECVPAELAKAVTEAVAVPVIGIGAGADTDGQVLVMHDMLGMVHGRAPRFIHDFLTDERNTEHSIEGAFALYQQSVKEGSFPTEQHQFS.

The Mg(2+) site is built by Asp-43 and Asp-82. Residues 43–44, Asp-82, and Lys-110 contribute to the 3-methyl-2-oxobutanoate site; that span reads DS. Glu-112 provides a ligand contact to Mg(2+). Glu-179 (proton acceptor) is an active-site residue.

It belongs to the PanB family. Homodecamer; pentamer of dimers. It depends on Mg(2+) as a cofactor.

It is found in the cytoplasm. It catalyses the reaction 3-methyl-2-oxobutanoate + (6R)-5,10-methylene-5,6,7,8-tetrahydrofolate + H2O = 2-dehydropantoate + (6S)-5,6,7,8-tetrahydrofolate. Its pathway is cofactor biosynthesis; (R)-pantothenate biosynthesis; (R)-pantoate from 3-methyl-2-oxobutanoate: step 1/2. Its function is as follows. Catalyzes the reversible reaction in which hydroxymethyl group from 5,10-methylenetetrahydrofolate is transferred onto alpha-ketoisovalerate to form ketopantoate. In Psychrobacter cryohalolentis (strain ATCC BAA-1226 / DSM 17306 / VKM B-2378 / K5), this protein is 3-methyl-2-oxobutanoate hydroxymethyltransferase.